Consider the following 453-residue polypeptide: Cytochrome b-c1 complex subunit 2, mitochondrial (453 aa).

A mitochondrion-targeting transit peptide spans 1-14 (MKLLTRAGSFSRFY). An N6-acetyllysine mark is found at Lys-66, Lys-199, and Lys-250.

Belongs to the peptidase M16 family. UQCRC2/QCR2 subfamily. In terms of assembly, component of the ubiquinol-cytochrome c oxidoreductase (cytochrome b-c1 complex, complex III, CIII), a multisubunit enzyme composed of 11 subunits. The complex is composed of 3 respiratory subunits cytochrome b, cytochrome c1 and Rieske protein UQCRFS1, 2 core protein subunits UQCRC1/QCR1 and UQCRC2/QCR2, and 6 low-molecular weight protein subunits UQCRH/QCR6, UQCRB/QCR7, UQCRQ/QCR8, UQCR10/QCR9, UQCR11/QCR10 and subunit 9, the cleavage product of Rieske protein UQCRFS1. The complex exists as an obligatory dimer and forms supercomplexes (SCs) in the inner mitochondrial membrane with NADH-ubiquinone oxidoreductase (complex I, CI) and cytochrome c oxidase (complex IV, CIV), resulting in different assemblies (supercomplex SCI(1)III(2)IV(1) and megacomplex MCI(2)III(2)IV(2)). Interacts with RAB5IF. Interacts with STMP1.

It is found in the mitochondrion inner membrane. In terms of biological role, component of the ubiquinol-cytochrome c oxidoreductase, a multisubunit transmembrane complex that is part of the mitochondrial electron transport chain which drives oxidative phosphorylation. The respiratory chain contains 3 multisubunit complexes succinate dehydrogenase (complex II, CII), ubiquinol-cytochrome c oxidoreductase (cytochrome b-c1 complex, complex III, CIII) and cytochrome c oxidase (complex IV, CIV), that cooperate to transfer electrons derived from NADH and succinate to molecular oxygen, creating an electrochemical gradient over the inner membrane that drives transmembrane transport and the ATP synthase. The cytochrome b-c1 complex catalyzes electron transfer from ubiquinol to cytochrome c, linking this redox reaction to translocation of protons across the mitochondrial inner membrane, with protons being carried across the membrane as hydrogens on the quinol. In the process called Q cycle, 2 protons are consumed from the matrix, 4 protons are released into the intermembrane space and 2 electrons are passed to cytochrome c. The 2 core subunits UQCRC1/QCR1 and UQCRC2/QCR2 are homologous to the 2 mitochondrial-processing peptidase (MPP) subunits beta-MPP and alpha-MPP respectively, and they seem to have preserved their MPP processing properties. May be involved in the in situ processing of UQCRFS1 into the mature Rieske protein and its mitochondrial targeting sequence (MTS)/subunit 9 when incorporated into complex III. This is Cytochrome b-c1 complex subunit 2, mitochondrial (UQCRC2) from Homo sapiens (Human).